We begin with the raw amino-acid sequence, 322 residues long: Hydrolase C26A3.11 (322 aa).

The 247-residue stretch at 44–290 (FRIGLVQLAN…PSIVYADIDP (247 aa)) folds into the CN hydrolase domain. The Proton acceptor role is filled by E83. The Proton donor role is filled by K154. C195 (nucleophile) is an active-site residue.

Belongs to the carbon-nitrogen hydrolase superfamily. NIT1/NIT2 family.

This Schizosaccharomyces pombe (strain 972 / ATCC 24843) (Fission yeast) protein is Hydrolase C26A3.11.